Here is a 122-residue protein sequence, read N- to C-terminus: Large ribosomal subunit protein uL18 (122 aa).

The protein belongs to the universal ribosomal protein uL18 family. In terms of assembly, part of the 50S ribosomal subunit; part of the 5S rRNA/L5/L18/L25 subcomplex. Contacts the 5S and 23S rRNAs.

Functionally, this is one of the proteins that bind and probably mediate the attachment of the 5S RNA into the large ribosomal subunit, where it forms part of the central protuberance. The protein is Large ribosomal subunit protein uL18 of Mycobacterium ulcerans (strain Agy99).